A 147-amino-acid polypeptide reads, in one-letter code: Large ribosomal subunit protein uL15 (147 aa).

Residues 20–54 form a disordered region; sequence GRGIGSGKGKTSGKGHKGQKARGTGKVHPWFEGGQ. Over residues 30–44 the composition is skewed to basic residues; that stretch reads TSGKGHKGQKARGTG.

This sequence belongs to the universal ribosomal protein uL15 family. As to quaternary structure, part of the 50S ribosomal subunit.

Binds to the 23S rRNA. The protein is Large ribosomal subunit protein uL15 of Thermosipho africanus (strain TCF52B).